A 422-amino-acid chain; its full sequence is Histidine--tRNA ligase (422 aa).

This sequence belongs to the class-II aminoacyl-tRNA synthetase family. As to quaternary structure, homodimer.

Its subcellular location is the cytoplasm. The catalysed reaction is tRNA(His) + L-histidine + ATP = L-histidyl-tRNA(His) + AMP + diphosphate + H(+). This Syntrophomonas wolfei subsp. wolfei (strain DSM 2245B / Goettingen) protein is Histidine--tRNA ligase.